Here is a 326-residue protein sequence, read N- to C-terminus: F-box/LRR-repeat protein 12 (326 aa).

The region spanning 1–47 is the F-box domain; that stretch reads MATFADLPDSVLLEIFSYLPVRDRIRISRVCHHWKKLVDDRWLWRHV. 7 LRR repeats span residues 51-78, 86-111, 161-185, 186-211, 212-236, 237-261, and 266-291; these read LYTM…RMGG, APQL…CLHV, VPAF…VLGG, TYRV…EVLG, CTLS…IRLT, VRGL…CLLG, and PEMP…ELQG.

In terms of assembly, interacts with SKP1 and CUL1.

It participates in protein modification; protein ubiquitination. Substrate-recognition component of the SCF (SKP1-CUL1-F-box protein)-type E3 ubiquitin ligase complex. Mediates the polyubiquitination and proteasomal degradation of CAMK1 leading to disruption of cyclin D1/CDK4 complex assembly which results in G1 cell cycle arrest in lung epithelia. The polypeptide is F-box/LRR-repeat protein 12 (FBXL12) (Bos taurus (Bovine)).